Consider the following 61-residue polypeptide: Photosystem II reaction center protein K (61 aa).

A propeptide spanning residues 1–24 is cleaved from the precursor; the sequence is MLNILSFIGICLNSFLYSSSFFVA. The helical transmembrane segment at 40–60 threads the bilayer; it reads MPVIPLFFFLLAFVWQAAVSF.

Belongs to the PsbK family. PSII is composed of 1 copy each of membrane proteins PsbA, PsbB, PsbC, PsbD, PsbE, PsbF, PsbH, PsbI, PsbJ, PsbK, PsbL, PsbM, PsbT, PsbX, PsbY, PsbZ, Psb30/Ycf12, at least 3 peripheral proteins of the oxygen-evolving complex and a large number of cofactors. It forms dimeric complexes.

It localises to the plastid. The protein localises to the chloroplast thylakoid membrane. Its function is as follows. One of the components of the core complex of photosystem II (PSII). PSII is a light-driven water:plastoquinone oxidoreductase that uses light energy to abstract electrons from H(2)O, generating O(2) and a proton gradient subsequently used for ATP formation. It consists of a core antenna complex that captures photons, and an electron transfer chain that converts photonic excitation into a charge separation. This chain is Photosystem II reaction center protein K, found in Cucumis sativus (Cucumber).